The sequence spans 257 residues: Phosphatidylglycerol--prolipoprotein diacylglyceryl transferase (257 aa).

The next 4 helical transmembrane spans lie at 8 to 28 (IFGL…ILAY), 48 to 68 (VFIV…VIFN), 84 to 104 (EGGL…YLMS), and 109 to 129 (LNFL…QAIG). Position 130 (Arg-130) interacts with a 1,2-diacyl-sn-glycero-3-phospho-(1'-sn-glycerol). 3 helical membrane passes run 169 to 189 (PTFL…LLIT), 196 to 216 (GSIF…IEGL), and 225 to 245 (SLRM…ILII).

The protein belongs to the Lgt family.

The protein localises to the cell membrane. It catalyses the reaction L-cysteinyl-[prolipoprotein] + a 1,2-diacyl-sn-glycero-3-phospho-(1'-sn-glycerol) = an S-1,2-diacyl-sn-glyceryl-L-cysteinyl-[prolipoprotein] + sn-glycerol 1-phosphate + H(+). It functions in the pathway protein modification; lipoprotein biosynthesis (diacylglyceryl transfer). Catalyzes the transfer of the diacylglyceryl group from phosphatidylglycerol to the sulfhydryl group of the N-terminal cysteine of a prolipoprotein, the first step in the formation of mature lipoproteins. This is Phosphatidylglycerol--prolipoprotein diacylglyceryl transferase from Clostridium novyi (strain NT).